The sequence spans 191 residues: Cell number regulator 1 (191 aa).

Residues F13–P44 form a disordered region. Over residues A27–A37 the composition is skewed to low complexity. Residues I91–L113 traverse the membrane as a helical segment.

The protein belongs to the cornifelin family. As to expression, expressed in roots, coleoptiles, stalks and silks. Detected in leaves, apical meristems, immature ears and pericarps. Highest expression in coleoptiles and silks.

The protein localises to the membrane. Acts as a negative regulator of cell number. In Zea mays (Maize), this protein is Cell number regulator 1 (CNR1).